We begin with the raw amino-acid sequence, 364 residues long: tRNA 2-selenouridine synthase (364 aa).

The Rhodanese domain maps to 14–137 (LLADTPLIDV…LRQTAIQATW (124 aa)). The active-site S-selanylcysteine intermediate is the Cys-97.

Belongs to the SelU family. As to quaternary structure, monomer.

It carries out the reaction 5-methylaminomethyl-2-thiouridine(34) in tRNA + selenophosphate + (2E)-geranyl diphosphate + H2O + H(+) = 5-methylaminomethyl-2-selenouridine(34) in tRNA + (2E)-thiogeraniol + phosphate + diphosphate. The enzyme catalyses 5-methylaminomethyl-2-thiouridine(34) in tRNA + (2E)-geranyl diphosphate = 5-methylaminomethyl-S-(2E)-geranyl-thiouridine(34) in tRNA + diphosphate. It catalyses the reaction 5-methylaminomethyl-S-(2E)-geranyl-thiouridine(34) in tRNA + selenophosphate + H(+) = 5-methylaminomethyl-2-(Se-phospho)selenouridine(34) in tRNA + (2E)-thiogeraniol. The catalysed reaction is 5-methylaminomethyl-2-(Se-phospho)selenouridine(34) in tRNA + H2O = 5-methylaminomethyl-2-selenouridine(34) in tRNA + phosphate. Functionally, involved in the post-transcriptional modification of the uridine at the wobble position (U34) of tRNA(Lys), tRNA(Glu) and tRNA(Gln). Catalyzes the conversion of 2-thiouridine (S2U-RNA) to 2-selenouridine (Se2U-RNA). Acts in a two-step process involving geranylation of 2-thiouridine (S2U) to S-geranyl-2-thiouridine (geS2U) and subsequent selenation of the latter derivative to 2-selenouridine (Se2U) in the tRNA chain. The polypeptide is tRNA 2-selenouridine synthase (Salmonella paratyphi A (strain ATCC 9150 / SARB42)).